The primary structure comprises 244 residues: Signal recognition particle receptor subunit beta (244 aa).

The chain crosses the membrane as a helical span at residues 7–23; the sequence is IIACLLVIGTTIALIAV. GTP-binding positions include 45-53, 66-69, Gly90, and 154-157; these read GPQNSGKTS, TVVS, and NKSE.

This sequence belongs to the SRP receptor beta subunit family. As to quaternary structure, heterodimer of an alpha and a beta chain.

The protein resides in the endoplasmic reticulum membrane. In terms of biological role, component of the signal recognition particle (SRP) complex receptor (SR). Ensures, in conjunction with the SRP complex, the correct targeting of the nascent secretory proteins to the endoplasmic reticulum membrane system. May mediate the membrane association of SR. In Saccharomyces cerevisiae (strain ATCC 204508 / S288c) (Baker's yeast), this protein is Signal recognition particle receptor subunit beta (SRP102).